Consider the following 21-residue polypeptide: Agglutinin beta-1 chain (21 aa).

Residues 1–10 (NGPNGKSQSI) are compositionally biased toward polar residues. The segment at 1–21 (NGPNGKSQSIIVGPWGDRVTN) is disordered.

It belongs to the jacalin lectin family. As to quaternary structure, formed of four alpha chains and four beta chains.

D-galactose-specific lectin, binds the T-antigen structure Gal-beta1,3-GalNAc. This Maclura pomifera (Osage orange) protein is Agglutinin beta-1 chain.